Reading from the N-terminus, the 255-residue chain is uncharacterized protein (255 aa).

A disordered region spans residues 42–67 (ACSGSPPEPGKGRPDTTPEQEVPVTA).

This is an uncharacterized protein from Mycobacterium tuberculosis (strain CDC 1551 / Oshkosh).